Reading from the N-terminus, the 111-residue chain is 2Fe-2S ferredoxin (111 aa).

Residues I5 to T107 enclose the 2Fe-2S ferredoxin-type domain. [2Fe-2S] cluster contacts are provided by C42, C48, C51, and C88.

The protein belongs to the adrenodoxin/putidaredoxin family. [2Fe-2S] cluster serves as cofactor.

Functionally, ferredoxin are iron-sulfur proteins that transfer electrons in a wide variety of metabolic reactions. The polypeptide is 2Fe-2S ferredoxin (fdxB) (Rickettsia bellii (strain RML369-C)).